The following is a 373-amino-acid chain: Caspase-4 (373 aa).

The tract at residues 1–59 (MAENKHPDKPLKVLEQLGKEVLTEYLEKLVQSNVLKLKEEDKQKFNNAERSDKRWVFVD) is required for LPS-binding. The propeptide occupies 1 to 80 (MAENKHPDKP…MLLQTFFSVD (80 aa)). Residues 1-91 (MAENKHPDKP…GSHHGEANLE (91 aa)) form the CARD domain. Residue S83 is modified to Phosphoserine. Residues H206 and C254 contribute to the active site. The propeptide occupies 267-285 (SSKPQLCRGVDLPRNMEAD). Residue R310 is modified to (Microbial infection) ADP-riboxanated arginine.

The protein belongs to the peptidase C14A family. Heterotetramer that consists of two anti-parallel arranged heterodimers, each one formed by a 20 kDa (Caspase-4 subunit p20) and a 10 kDa (Caspase-4 subunit p10) subunit. Upon direct LPS-binding, forms large homooligomers, resulting in its activation. These oligomers are often referred to as 'non-canonical inflammasomes'. In its precursor form, interacts with TMEM214; this interaction is required for association with the endoplasmic reticulum membrane. Interacts with CASP1. Interacts with NOD2. Interacts with Serpinb1a, Serpinb1b and Serpinb1c; these interactions regulate CASP4 activity. As to quaternary structure, heterotetramer that consists of two anti-parallel arranged heterodimers, each one formed by a 20 kDa (Caspase-4 subunit p20) and a 10 kDa (Caspase-4 subunit p10) subunit. In response to activation signals, undergoes autoproteolytic cleavage and activation. Post-translationally, (Microbial infection) ADP-riboxanation by S.flexneri OspC3 blocks CASP4 autoprocessing, preventing CASP4 activation and ability to recognize and cleave GSDMD, thereby thwarting the inflammasome/pyroptosis-mediated defense. In terms of tissue distribution, widely expressed, including in thymus, lung and spleen (at protein level). Very low levels, if any, in the brain.

Its subcellular location is the cytoplasm. The protein resides in the cytosol. It is found in the endoplasmic reticulum membrane. It localises to the mitochondrion. The protein localises to the inflammasome. Its subcellular location is the secreted. It catalyses the reaction Strict requirement for Asp at the P1 position and has a preferred cleavage sequence of (Ile/Leu/Val/Phe)-Gly-His-Asp-|-.. Its activity is regulated as follows. Activated by homooligomerization induced by direct binding to cytosolic LPS, in a TLR4-independent manner. In addition to LPS, CASP4/CASP11 may also be activated by oxidized phospholipid 1-palmitoyl-2-arachidonoyl- sn-glycero-3-phosphorylcholine, an oxidized phospholipid (oxPAPC), in dendritic cells, promoting adaptive immunity. The role of oxPAPC is however unclear and another report suggests that oxPAPC competes with LPS-binding and inhibits the non-canonical inflammasome in macrophages. Inflammatory caspase that acts as the effector of the non-canonical inflammasome by mediating lipopolysaccharide (LPS)-induced pyroptosis. Also indirectly activates the NLRP3 and NLRP6 inflammasomes. Acts as a thiol protease that cleaves a tetrapeptide after an Asp residue at position P1: catalyzes cleavage of CGAS and GSDMD. In contrast to its human ortholog, does not cleave IL18. Effector of the non-canonical inflammasome independently of NLRP3 inflammasome and CASP1: the non-canonical inflammasome promotes pyroptosis through GSDMD cleavage without involving secretion of cytokine IL1B and IL18. In the non-canonical inflammasome, CASP4/CASP11 is activated by direct binding to the lipid A moiety of LPS without the need of an upstream sensor. LPS-binding promotes CASP4/CASP11 activation and CASP4/CASP11-mediated cleavage of GSDMD, followed by pyroptosis of infected cells and their extrusion into the gut lumen. Also indirectly promotes secretion of mature cytokines (IL1A, IL18 and HMGB1) downstream of GSDMD-mediated pyroptosis via activation of the NLRP3 and NLRP6 inflammasomes. Involved in NLRP3-dependent CASP1 activation and IL1B and IL18 secretion in response to non-canonical activators, such as UVB radiation or cholera enterotoxin. Involved in NLRP6 inflammasome-dependent activation in response to lipoteichoic acid (LTA), a cell-wall component of Gram-positive bacteria, which leads to CASP1 activation and IL1B and IL18 secretion. Involved in LPS-induced IL6 secretion; this activity may not require caspase enzymatic activity. The non-canonical inflammasome is required for innate immunity to cytosolic, but not vacuolar, bacteria. Plays a crucial role in the restriction of S.typhimurium replication in colonic epithelial cells during infection. Activation of the non-canonical inflammasome in brain endothelial cells can lead to excessive pyroptosis, leading to blood-brain barrier breakdown. Pyroptosis limits bacterial replication, while cytokine secretion promotes the recruitment and activation of immune cells and triggers mucosal inflammation. May also act as an activator of adaptive immunity in dendritic cells, following activation by oxidized phospholipid 1-palmitoyl-2-arachidonoyl- sn-glycero-3-phosphorylcholine, an oxidized phospholipid (oxPAPC). Cleavage of GSDMD is not strictly dependent on the consensus cleavage site but depends on an exosite interface on CASP4/CASP11 that recognizes and binds the Gasdermin-D, C-terminal (GSDMD-CT) part. In contrast, it does not directly process IL1B. During non-canonical inflammasome activation, cuts CGAS and may play a role in the regulation of antiviral innate immune activation. In Mus musculus (Mouse), this protein is Caspase-4.